The primary structure comprises 511 residues: Cytochrome P450 89A9 (511 aa).

Residues 6-26 (IIFLIISSLTFSIFLKLIFFF) traverse the membrane as a helical; Signal-anchor for type II membrane protein segment. Cys454 lines the heme pocket.

The protein belongs to the cytochrome P450 family. Heme is required as a cofactor.

Its subcellular location is the endoplasmic reticulum membrane. The catalysed reaction is primary fluorescent chlorophyll catabolite + reduced [NADPH--hemoprotein reductase] + O2 = primary fluorescent dioxobilin-type chlorophyll catabolite + formate + oxidized [NADPH--hemoprotein reductase] + 2 H(+). The protein operates within porphyrin-containing compound metabolism; chlorophyll degradation. Involved in the chlorophyll breakdown by its action in nonpolar primary fluorescent chlorophyll catabolite (pFCC) decarbonylation. Involved in the formation of major chlorophyll breakdown products, including non-fluorescent dioxobilin-type chlorophyll catabolites (NDCCs), during leaf senescence. The sequence is that of Cytochrome P450 89A9 from Arabidopsis thaliana (Mouse-ear cress).